Reading from the N-terminus, the 598-residue chain is Elongation factor 4 (598 aa).

The tr-type G domain occupies Lys2 to Glu184. GTP-binding positions include Asp14–Thr19 and Asn131–Asp134.

It belongs to the TRAFAC class translation factor GTPase superfamily. Classic translation factor GTPase family. LepA subfamily.

The protein resides in the cell inner membrane. The catalysed reaction is GTP + H2O = GDP + phosphate + H(+). Its function is as follows. Required for accurate and efficient protein synthesis under certain stress conditions. May act as a fidelity factor of the translation reaction, by catalyzing a one-codon backward translocation of tRNAs on improperly translocated ribosomes. Back-translocation proceeds from a post-translocation (POST) complex to a pre-translocation (PRE) complex, thus giving elongation factor G a second chance to translocate the tRNAs correctly. Binds to ribosomes in a GTP-dependent manner. In Histophilus somni (strain 2336) (Haemophilus somnus), this protein is Elongation factor 4.